The chain runs to 201 residues: Adenylyl-sulfate kinase (201 aa).

ATP is bound at residue 35-42; the sequence is GLSGSGKS. Ser109 (phosphoserine intermediate) is an active-site residue.

The protein belongs to the APS kinase family.

The catalysed reaction is adenosine 5'-phosphosulfate + ATP = 3'-phosphoadenylyl sulfate + ADP + H(+). Its pathway is sulfur metabolism; hydrogen sulfide biosynthesis; sulfite from sulfate: step 2/3. Functionally, catalyzes the synthesis of activated sulfate. The sequence is that of Adenylyl-sulfate kinase from Salmonella gallinarum (strain 287/91 / NCTC 13346).